The chain runs to 289 residues: UDP-3-O-acyl-N-acetylglucosamine deacetylase (289 aa).

Residues H79, H236, and D240 each coordinate Zn(2+). Residue H263 is the Proton donor of the active site.

It belongs to the LpxC family. Zn(2+) serves as cofactor.

It carries out the reaction a UDP-3-O-[(3R)-3-hydroxyacyl]-N-acetyl-alpha-D-glucosamine + H2O = a UDP-3-O-[(3R)-3-hydroxyacyl]-alpha-D-glucosamine + acetate. The protein operates within glycolipid biosynthesis; lipid IV(A) biosynthesis; lipid IV(A) from (3R)-3-hydroxytetradecanoyl-[acyl-carrier-protein] and UDP-N-acetyl-alpha-D-glucosamine: step 2/6. Functionally, catalyzes the hydrolysis of UDP-3-O-myristoyl-N-acetylglucosamine to form UDP-3-O-myristoylglucosamine and acetate, the committed step in lipid A biosynthesis. The sequence is that of UDP-3-O-acyl-N-acetylglucosamine deacetylase from Rickettsia typhi (strain ATCC VR-144 / Wilmington).